A 45-amino-acid polypeptide reads, in one-letter code: uncharacterized protein (45 aa).

This is an uncharacterized protein from Haemophilus influenzae (strain ATCC 51907 / DSM 11121 / KW20 / Rd).